Consider the following 365-residue polypeptide: Geranylgeranyl pyrophosphate synthase (365 aa).

Polar residues predominate over residues 1-11 (MKPLPSTNGKV). A disordered region spans residues 1-36 (MKPLPSTNGKVNGNGKHHDSSLSSTSSTSSSSSSDT). The span at 21 to 34 (SLSSTSSTSSSSSS) shows a compositional bias: low complexity. Isopentenyl diphosphate contacts are provided by K78, R81, and H110. Positions 117 and 121 each coordinate Mg(2+). Residue R126 participates in dimethylallyl diphosphate binding. Residue R127 participates in isopentenyl diphosphate binding. K211, T212, and Q247 together coordinate dimethylallyl diphosphate. Residue D250 participates in Mg(2+) binding. N254, K263, and K273 together coordinate dimethylallyl diphosphate.

It belongs to the FPP/GGPP synthase family. The cofactor is Mg(2+).

The enzyme catalyses isopentenyl diphosphate + dimethylallyl diphosphate = (2E)-geranyl diphosphate + diphosphate. It carries out the reaction isopentenyl diphosphate + (2E)-geranyl diphosphate = (2E,6E)-farnesyl diphosphate + diphosphate. It catalyses the reaction isopentenyl diphosphate + (2E,6E)-farnesyl diphosphate = (2E,6E,10E)-geranylgeranyl diphosphate + diphosphate. Its function is as follows. Geranylgeranyl pyrophosphate synthase that catalyzes the trans-addition of the three molecules of IPP onto DMAPP to form geranylgeranyl pyrophosphate. Does not show any monoterpene nor sesquiterpene synthase activity. This is Geranylgeranyl pyrophosphate synthase from Melampsora lini (Rust fungus).